Reading from the N-terminus, the 278-residue chain is 4-diphosphocytidyl-2-C-methyl-D-erythritol kinase (278 aa).

The active site involves K9. 89 to 99 (PVASGIGGGSA) contributes to the ATP binding site. Residue D128 is part of the active site.

This sequence belongs to the GHMP kinase family. IspE subfamily.

The catalysed reaction is 4-CDP-2-C-methyl-D-erythritol + ATP = 4-CDP-2-C-methyl-D-erythritol 2-phosphate + ADP + H(+). The protein operates within isoprenoid biosynthesis; isopentenyl diphosphate biosynthesis via DXP pathway; isopentenyl diphosphate from 1-deoxy-D-xylulose 5-phosphate: step 3/6. Functionally, catalyzes the phosphorylation of the position 2 hydroxy group of 4-diphosphocytidyl-2C-methyl-D-erythritol. This chain is 4-diphosphocytidyl-2-C-methyl-D-erythritol kinase, found in Cereibacter sphaeroides (strain ATCC 17025 / ATH 2.4.3) (Rhodobacter sphaeroides).